Reading from the N-terminus, the 463-residue chain is Chaperone SurA (463 aa).

A signal peptide spans 1–25 (MTKPFSVVLASLLAITSTVSPLASA). 2 PpiC domains span residues 174–276 (GSQY…KLVE) and 289–388 (VTEY…QRVG). Disordered regions lie at residues 329 to 348 (ATAK…GDLG) and 431 to 463 (YRTG…KPTR). The span at 441 to 450 (ATAAPAKSPD) shows a compositional bias: low complexity. The segment covering 451-463 (PAAPSPPPAKPTR) has biased composition (pro residues).

The protein resides in the periplasm. It catalyses the reaction [protein]-peptidylproline (omega=180) = [protein]-peptidylproline (omega=0). Chaperone involved in the correct folding and assembly of outer membrane proteins. Recognizes specific patterns of aromatic residues and the orientation of their side chains, which are found more frequently in integral outer membrane proteins. May act in both early periplasmic and late outer membrane-associated steps of protein maturation. The sequence is that of Chaperone SurA from Xanthomonas axonopodis pv. citri (strain 306).